A 461-amino-acid polypeptide reads, in one-letter code: ATP synthase subunit beta 2 (461 aa).

151–158 contributes to the ATP binding site; sequence GGAGVGKT.

Belongs to the ATPase alpha/beta chains family. In terms of assembly, F-type ATPases have 2 components, CF(1) - the catalytic core - and CF(0) - the membrane proton channel. CF(1) has five subunits: alpha(3), beta(3), gamma(1), delta(1), epsilon(1). CF(0) has three main subunits: a(1), b(2) and c(9-12). The alpha and beta chains form an alternating ring which encloses part of the gamma chain. CF(1) is attached to CF(0) by a central stalk formed by the gamma and epsilon chains, while a peripheral stalk is formed by the delta and b chains.

Its subcellular location is the cell inner membrane. It catalyses the reaction ATP + H2O + 4 H(+)(in) = ADP + phosphate + 5 H(+)(out). Produces ATP from ADP in the presence of a proton gradient across the membrane. The catalytic sites are hosted primarily by the beta subunits. This is ATP synthase subunit beta 2 from Vibrio campbellii (strain ATCC BAA-1116).